The following is a 63-amino-acid chain: ATP synthase subunit epsilon, mitochondrial (63 aa).

In terms of assembly, F-type ATP synthases have 2 components, the catalytic core F(1) and the membrane-embedded component F(0), linked together by a central stalk and a peripheral stalk. The central stalk, also called rotor shaft, is often seen as part of F(1). The peripheral stalk is seen as part of F(0). F(0) contains the membrane channel next to the rotor. F-type ATP synthases form dimers but each monomer functions independently in ATP generation. The dimer consists of 18 different polypeptides: ATP1 (subunit alpha, part of F(1), 3 molecules per monomer), ATP2 (subunit beta, part of F(1), 3 molecules per monomer), ATP3 (subunit gamma, part of the central stalk), ATP4 (subunit b, part of the peripheral stalk), ATP5/OSCP (subunit 5/OSCP, part of the peripheral stalk), ATP6 (subunit a, part of the peripheral stalk), ATP7 (subunit d, part of the peripheral stalk), ATP8 (subunit 8, part of the peripheral stalk), OLI1 (subunit c, part of the rotor, 10 molecules per monomer), ATP14 (subunit h, part of the peripheral stalk), ATP15 (subunit epsilon, part of the central stalk), ATP16 (subunit delta, part of the central stalk), ATP17 (subunit f, part of the peripheral stalk), ATP18 (subunit i/j, part of the peripheral stalk). Dimer-specific subunits are ATP19 (subunit k, at interface between monomers), ATP20 (subunit g, at interface between monomers), TIM11 (subunit e, at interface between monomers). Also contains subunit L.

The protein resides in the mitochondrion inner membrane. In terms of biological role, mitochondrial membrane ATP synthase (F(1)F(0) ATP synthase or Complex V) produces ATP from ADP in the presence of a proton gradient across the membrane which is generated by electron transport complexes of the respiratory chain. F-type ATP synthases consist of two structural domains, F(1) - containing the extramembraneous catalytic core, and F(0) - containing the membrane proton channel, linked together by a central stalk and a peripheral stalk. During catalysis, ATP synthesis in the catalytic domain of F(1) is coupled via a rotary mechanism of the central stalk subunits to proton translocation. Part of the complex F(1) domain and the central stalk which is part of the complex rotary element. Rotation of the central stalk against the surrounding alpha/ATP1(3)beta/ATP2(3) subunits leads to hydrolysis of ATP in three separate catalytic sites on the beta/ATP2 subunits. The polypeptide is ATP synthase subunit epsilon, mitochondrial (Pichia angusta (Yeast)).